The sequence spans 411 residues: F-box protein At4g19940 (411 aa).

An F-box domain is found at 29-75 (RQPIPEIPFDLVIEILTRLPAKSLMRFKSVSKLWSSLICSRNFTNRL).

This is F-box protein At4g19940 from Arabidopsis thaliana (Mouse-ear cress).